Reading from the N-terminus, the 247-residue chain is tRNA (guanine-N(7)-)-methyltransferase (247 aa).

Residues glycine 70, 93–94 (EI), 128–129 (NA), and leucine 148 contribute to the S-adenosyl-L-methionine site. Aspartate 151 is an active-site residue. Residue 226 to 228 (SEE) coordinates S-adenosyl-L-methionine.

This sequence belongs to the class I-like SAM-binding methyltransferase superfamily. TrmB family.

The protein resides in the nucleus. The catalysed reaction is guanosine(46) in tRNA + S-adenosyl-L-methionine = N(7)-methylguanosine(46) in tRNA + S-adenosyl-L-homocysteine. It participates in tRNA modification; N(7)-methylguanine-tRNA biosynthesis. In terms of biological role, catalyzes the formation of N(7)-methylguanine at position 46 (m7G46) in tRNA. The sequence is that of tRNA (guanine-N(7)-)-methyltransferase from Drosophila virilis (Fruit fly).